The sequence spans 286 residues: ATP synthase gamma chain (286 aa).

It belongs to the ATPase gamma chain family. In terms of assembly, F-type ATPases have 2 components, CF(1) - the catalytic core - and CF(0) - the membrane proton channel. CF(1) has five subunits: alpha(3), beta(3), gamma(1), delta(1), epsilon(1). CF(0) has three main subunits: a, b and c.

The protein resides in the cell membrane. Functionally, produces ATP from ADP in the presence of a proton gradient across the membrane. The gamma chain is believed to be important in regulating ATPase activity and the flow of protons through the CF(0) complex. This Bacillus mycoides (strain KBAB4) (Bacillus weihenstephanensis) protein is ATP synthase gamma chain.